A 342-amino-acid polypeptide reads, in one-letter code: Nucleoid-associated protein Sputcn32_2288 (342 aa).

The protein belongs to the YejK family.

The protein resides in the cytoplasm. The protein localises to the nucleoid. The sequence is that of Nucleoid-associated protein Sputcn32_2288 from Shewanella putrefaciens (strain CN-32 / ATCC BAA-453).